Reading from the N-terminus, the 417-residue chain is UDP-N-acetylglucosamine 1-carboxyvinyltransferase (417 aa).

Residue 22 to 23 coordinates phosphoenolpyruvate; the sequence is KN. Position 92 (R92) interacts with UDP-N-acetyl-alpha-D-glucosamine. The Proton donor role is filled by C116. A 2-(S-cysteinyl)pyruvic acid O-phosphothioketal modification is found at C116. 2 residues coordinate UDP-N-acetyl-alpha-D-glucosamine: D304 and I326.

It belongs to the EPSP synthase family. MurA subfamily.

The protein resides in the cytoplasm. It carries out the reaction phosphoenolpyruvate + UDP-N-acetyl-alpha-D-glucosamine = UDP-N-acetyl-3-O-(1-carboxyvinyl)-alpha-D-glucosamine + phosphate. The protein operates within cell wall biogenesis; peptidoglycan biosynthesis. Its function is as follows. Cell wall formation. Adds enolpyruvyl to UDP-N-acetylglucosamine. This chain is UDP-N-acetylglucosamine 1-carboxyvinyltransferase, found in Desulfosudis oleivorans (strain DSM 6200 / JCM 39069 / Hxd3) (Desulfococcus oleovorans).